The chain runs to 273 residues: Medium-wave-sensitive opsin 1 (273 aa).

Topologically, residues 1-5 (APRWV) are extracellular. The helical transmembrane segment at 6–30 (YHLTSAWMVFVVIASVFTNGLVLAA) threads the bilayer. At 31–42 (TMRFKKLRHPLN) the chain is on the cytoplasmic side. The helical transmembrane segment at 43 to 68 (WILVNLAIADLVETIIASTISVVNQM) threads the bilayer. Residues 69–82 (YGYFVLGHPLCVVE) are Extracellular-facing. Residues cysteine 79 and cysteine 156 are joined by a disulfide bond. A helical membrane pass occupies residues 83 to 102 (GYTASLCGITGLWSLAIISW). Topologically, residues 103–121 (ERWMVVCRPFGNVRFDAKL) are cytoplasmic. The chain crosses the membrane as a helical span at residues 122-145 (AIAGIAFSWIWAAVWTAPPIFGWS). The Extracellular segment spans residues 146-171 (RYWPHGLKTSCGPDVFSGSSYPGVQS). A helical membrane pass occupies residues 172 to 199 (YMIVLMITCCFIPLSVIVLCYLQVWLAI). At 200-221 (RAVAKQQKESESTQKAEKEVTR) the chain is on the cytoplasmic side. Residues 222–245 (MVMVMIFAFCLCWGPYAFFACFAA) traverse the membrane as a helical segment. Over 246 to 253 (AHPGYAFH) the chain is Extracellular. The helical transmembrane segment at 254 to 273 (PLVAALPAYFAKSATIYNPI) threads the bilayer. An N6-(retinylidene)lysine modification is found at lysine 265.

This sequence belongs to the G-protein coupled receptor 1 family. Opsin subfamily. As to quaternary structure, monomer. Homodimer. Homotetramer. In terms of processing, O-glycosylated. Post-translationally, phosphorylated on some or all of the serine and threonine residues present in the C-terminal region. As to expression, the three color pigments are found in the cone photoreceptor cells.

The protein localises to the membrane. Its function is as follows. Visual pigments are the light-absorbing molecules that mediate vision. They consist of an apoprotein, opsin, covalently linked to cis-retinal. The protein is Medium-wave-sensitive opsin 1 (OPN1MW) of Odocoileus virginianus virginianus (Virginia white-tailed deer).